A 153-amino-acid polypeptide reads, in one-letter code: Holo-[acyl-carrier-protein] synthase (153 aa).

Residues Asp24 and Glu78 each contribute to the Mg(2+) site.

Belongs to the P-Pant transferase superfamily. AcpS family. Mg(2+) is required as a cofactor.

The protein localises to the cytoplasm. It carries out the reaction apo-[ACP] + CoA = holo-[ACP] + adenosine 3',5'-bisphosphate + H(+). Functionally, transfers the 4'-phosphopantetheine moiety from coenzyme A to a Ser of acyl-carrier-protein. The sequence is that of Holo-[acyl-carrier-protein] synthase from Bordetella pertussis (strain Tohama I / ATCC BAA-589 / NCTC 13251).